The following is a 183-amino-acid chain: uncharacterized protein (183 aa).

This is an uncharacterized protein from Homo sapiens (Human).